The primary structure comprises 42 residues: Lanthionine-containing peptide SapB precursor RamS (42 aa).

The propeptide occupies Met1–Glu21. A disordered region spans residues Met1–Glu21. 2 cross-links (lanthionine (Ser-Cys)) span residues Ser24 to Cys31 and Ser34 to Cys41. 2 positions are modified to 2,3-didehydroalanine (Ser): Ser27 and Ser37.

This sequence belongs to the lanthionine-containing morphogen family. Maturation involves the enzymatic conversion of Ser into dehydrated AA and the formation of thioether bonds with cysteine, probably by RamC. This is followed by membrane translocation and cleavage of the modified precursor. The RamS precursor protein (detected by an anti-propeptide antibody and by a C-terminal His-tag) is detected from at least 16 hours post-germination; its apparent molecular weight decreases starting from about 34 hours, when its probable modifying enzyme ramC is transcribed. Surfactin, a B.subtilis cyclic lipopeptide antibiotic which prevents aerial hyphae formation in S.coelicolor, decreases localization of RamS precursor protein to the cell membrane, suggesting that processing only occurs at the cell membrane.

The protein resides in the cell membrane. Its subcellular location is the secreted. The protein localises to the spore wall. Functionally, stably accumulated precursor of SapB. Its function is as follows. Lanthionine-containing peptide devoid of antibiotic properties. A surface active peptide involved in the efficient formation of aerial mycelium when cells are grown in rich media. Has an overlapping function with the surface-active chaplin proteins; chaplins are essential on minimal medium while on rich medium both chaplins and SapB are required for efficient aerial hyphae formation. Required under conditions of high osmolarity where it may change the physical properties of the chaplin layer to allow hyphae to grow into air. Suggested to self-assemble at air-water interfaces, thus providing a film of surfactant through which nascent aerial hyphae can emerge; the aerial hyphae differentiate further into spores. Application to bald mutants (bld, unable to make aerial hyphae) restores hyphae growth. Application to chaplin negative mutants as well as ramC-ramS-ramA-ramB and ramR deletions also restores aerial hyphae growth and sporulation. Reduces surface tension of water from 72 to 30 mJ/m(2). The polypeptide is Lanthionine-containing peptide SapB precursor RamS (ramS) (Streptomyces coelicolor (strain ATCC BAA-471 / A3(2) / M145)).